Reading from the N-terminus, the 238-residue chain is Uridylate kinase (238 aa).

12-15 (KLSG) serves as a coordination point for ATP. UMP is bound at residue G54. G55 and R59 together coordinate ATP. Residues D74 and 135 to 142 (TGNPYFTT) each bind UMP. Residues T162, Y168, and D171 each coordinate ATP.

It belongs to the UMP kinase family. In terms of assembly, homohexamer.

It is found in the cytoplasm. It catalyses the reaction UMP + ATP = UDP + ADP. It participates in pyrimidine metabolism; CTP biosynthesis via de novo pathway; UDP from UMP (UMPK route): step 1/1. Inhibited by UTP. Its function is as follows. Catalyzes the reversible phosphorylation of UMP to UDP. The chain is Uridylate kinase from Nitratidesulfovibrio vulgaris (strain ATCC 29579 / DSM 644 / CCUG 34227 / NCIMB 8303 / VKM B-1760 / Hildenborough) (Desulfovibrio vulgaris).